The following is a 383-amino-acid chain: Protein pelota homolog (383 aa).

It belongs to the eukaryotic release factor 1 family. Pelota subfamily. As to quaternary structure, component of the Pelota-HBS1L complex, also named Dom34-Hbs1 complex, composed of PELO and HBS1L. The cofactor is a divalent metal cation.

The protein localises to the cytoplasm. Its function is as follows. Component of the Pelota-HBS1L complex, a complex that recognizes stalled ribosomes and triggers the No-Go Decay (NGD) pathway. In the Pelota-HBS1L complex, PELO recognizes ribosomes stalled at the 3' end of an mRNA and engages stalled ribosomes by destabilizing mRNA in the mRNA channel. Following mRNA extraction from stalled ribosomes by the SKI complex, the Pelota-HBS1L complex promotes recruitment of ABCE1, which drives the disassembly of stalled ribosomes, followed by degradation of damaged mRNAs as part of the NGD pathway. The polypeptide is Protein pelota homolog (pelo) (Xenopus laevis (African clawed frog)).